Reading from the N-terminus, the 119-residue chain is Ribosome-binding factor A (119 aa).

It belongs to the RbfA family. Monomer. Binds 30S ribosomal subunits, but not 50S ribosomal subunits or 70S ribosomes.

It localises to the cytoplasm. Its function is as follows. One of several proteins that assist in the late maturation steps of the functional core of the 30S ribosomal subunit. Associates with free 30S ribosomal subunits (but not with 30S subunits that are part of 70S ribosomes or polysomes). Required for efficient processing of 16S rRNA. May interact with the 5'-terminal helix region of 16S rRNA. This Buchnera aphidicola subsp. Baizongia pistaciae (strain Bp) protein is Ribosome-binding factor A.